A 300-amino-acid polypeptide reads, in one-letter code: 4-hydroxy-tetrahydrodipicolinate synthase (300 aa).

A pyruvate-binding site is contributed by Thr-49. Tyr-137 acts as the Proton donor/acceptor in catalysis. The Schiff-base intermediate with substrate role is filled by Lys-166. Position 208 (Ile-208) interacts with pyruvate.

Belongs to the DapA family. In terms of assembly, homotetramer; dimer of dimers.

Its subcellular location is the cytoplasm. It catalyses the reaction L-aspartate 4-semialdehyde + pyruvate = (2S,4S)-4-hydroxy-2,3,4,5-tetrahydrodipicolinate + H2O + H(+). The protein operates within amino-acid biosynthesis; L-lysine biosynthesis via DAP pathway; (S)-tetrahydrodipicolinate from L-aspartate: step 3/4. Functionally, catalyzes the condensation of (S)-aspartate-beta-semialdehyde [(S)-ASA] and pyruvate to 4-hydroxy-tetrahydrodipicolinate (HTPA). This Methanopyrus kandleri (strain AV19 / DSM 6324 / JCM 9639 / NBRC 100938) protein is 4-hydroxy-tetrahydrodipicolinate synthase.